A 475-amino-acid chain; its full sequence is Ribulose bisphosphate carboxylase large chain (475 aa).

The propeptide occupies 1 to 2 (MS). Pro-3 bears the N-acetylproline mark. N6,N6,N6-trimethyllysine is present on Lys-14. The substrate site is built by Asn-123 and Thr-173. The active-site Proton acceptor is the Lys-175. Lys-177 is a substrate binding site. The Mg(2+) site is built by Lys-201, Asp-203, and Glu-204. Residue Lys-201 is modified to N6-carboxylysine. His-294 (proton acceptor) is an active-site residue. 3 residues coordinate substrate: Arg-295, His-327, and Ser-379.

The protein belongs to the RuBisCO large chain family. Type I subfamily. In terms of assembly, heterohexadecamer of 8 large chains and 8 small chains; disulfide-linked. The disulfide link is formed within the large subunit homodimers. The cofactor is Mg(2+). Post-translationally, the disulfide bond which can form in the large chain dimeric partners within the hexadecamer appears to be associated with oxidative stress and protein turnover.

It localises to the plastid. The protein localises to the chloroplast. The catalysed reaction is 2 (2R)-3-phosphoglycerate + 2 H(+) = D-ribulose 1,5-bisphosphate + CO2 + H2O. It carries out the reaction D-ribulose 1,5-bisphosphate + O2 = 2-phosphoglycolate + (2R)-3-phosphoglycerate + 2 H(+). RuBisCO catalyzes two reactions: the carboxylation of D-ribulose 1,5-bisphosphate, the primary event in carbon dioxide fixation, as well as the oxidative fragmentation of the pentose substrate in the photorespiration process. Both reactions occur simultaneously and in competition at the same active site. This Alnus incana (White alder) protein is Ribulose bisphosphate carboxylase large chain.